Reading from the N-terminus, the 127-residue chain is MSAKSSEPPFEPSSEGEQLPSRFEVELEFVQSLANIPYVTFLLTQHQIWQDPRFKAYLKYLEYWCEPPYTQFIVYPNCLFVLKLLNSFLDKAVENEDGILEGAEDLPKVIQMQGGEWMNQMVERWRG.

Belongs to the Mediator complex subunit 31 family. Component of the Mediator complex.

The protein resides in the nucleus. In terms of biological role, component of the Mediator complex, a coactivator involved in the regulated transcription of nearly all RNA polymerase II-dependent genes. Mediator functions as a bridge to convey information from gene-specific regulatory proteins to the basal RNA polymerase II transcription machinery. Mediator is recruited to promoters by direct interactions with regulatory proteins and serves as a scaffold for the assembly of a functional preinitiation complex with RNA polymerase II and the general transcription factors. This Eremothecium gossypii (strain ATCC 10895 / CBS 109.51 / FGSC 9923 / NRRL Y-1056) (Yeast) protein is Mediator of RNA polymerase II transcription subunit 31 (SOH1).